A 471-amino-acid chain; its full sequence is ATP synthase subunit beta (471 aa).

ATP is bound at residue 153–160 (GGAGVGKT).

This sequence belongs to the ATPase alpha/beta chains family. In terms of assembly, F-type ATPases have 2 components, CF(1) - the catalytic core - and CF(0) - the membrane proton channel. CF(1) has five subunits: alpha(3), beta(3), gamma(1), delta(1), epsilon(1). CF(0) has four main subunits: a(1), b(1), b'(1) and c(9-12).

Its subcellular location is the cell membrane. It catalyses the reaction ATP + H2O + 4 H(+)(in) = ADP + phosphate + 5 H(+)(out). In terms of biological role, produces ATP from ADP in the presence of a proton gradient across the membrane. The catalytic sites are hosted primarily by the beta subunits. The polypeptide is ATP synthase subunit beta (Chloroflexus aurantiacus (strain ATCC 29364 / DSM 637 / Y-400-fl)).